The following is a 188-amino-acid chain: Large ribosomal subunit protein eL18 (188 aa).

Lys-119 is covalently cross-linked (Glycyl lysine isopeptide (Lys-Gly) (interchain with G-Cter in SUMO2)). A Phosphoserine modification is found at Ser-130. A disordered region spans residues 150-188; sequence RHFGKAPGTPHSHTKPYVRSKGRKFERARGRRASRGYKN. Thr-158 is modified (phosphothreonine). Composition is skewed to basic residues over residues 161–171 and 178–188; these read SHTKPYVRSKG and RGRRASRGYKN. Residue Lys-164 forms a Glycyl lysine isopeptide (Lys-Gly) (interchain with G-Cter in SUMO2) linkage.

This sequence belongs to the eukaryotic ribosomal protein eL18 family. As to quaternary structure, component of the large ribosomal subunit.

The protein localises to the cytoplasm. The protein resides in the cytosol. It localises to the rough endoplasmic reticulum. Component of the large ribosomal subunit. The ribosome is a large ribonucleoprotein complex responsible for the synthesis of proteins in the cell. The polypeptide is Large ribosomal subunit protein eL18 (Rpl18) (Rattus norvegicus (Rat)).